The following is an 857-amino-acid chain: DNA mismatch repair protein MutS (857 aa).

ATP is bound at residue 613–620 (GPNMGGKS). A disordered region spans residues 797–820 (TSLPHEQPAAHKAKDAPQVPHQSD).

Belongs to the DNA mismatch repair MutS family.

In terms of biological role, this protein is involved in the repair of mismatches in DNA. It is possible that it carries out the mismatch recognition step. This protein has a weak ATPase activity. The chain is DNA mismatch repair protein MutS from Pseudomonas putida (strain ATCC 700007 / DSM 6899 / JCM 31910 / BCRC 17059 / LMG 24140 / F1).